The sequence spans 243 residues: Uridylate kinase (243 aa).

15–18 (KLSG) contacts ATP. Glycine 56 provides a ligand contact to UMP. ATP-binding residues include glycine 57 and arginine 61. 138 to 145 (TGNPYFST) is a UMP binding site. 3 residues coordinate ATP: asparagine 166, tyrosine 172, and aspartate 175.

The protein belongs to the UMP kinase family. In terms of assembly, homohexamer.

It localises to the cytoplasm. The enzyme catalyses UMP + ATP = UDP + ADP. It participates in pyrimidine metabolism; CTP biosynthesis via de novo pathway; UDP from UMP (UMPK route): step 1/1. Its activity is regulated as follows. Inhibited by UTP. Functionally, catalyzes the reversible phosphorylation of UMP to UDP. This chain is Uridylate kinase, found in Mycoplasma genitalium (strain ATCC 33530 / DSM 19775 / NCTC 10195 / G37) (Mycoplasmoides genitalium).